The chain runs to 741 residues: Polyribonucleotide nucleotidyltransferase (741 aa).

Residues Asp-489 and Asp-495 each coordinate Mg(2+). The KH domain maps to 556–615 (PKIDSIQIPVDKIKVVIGKGGETIDKIIAETGVTIDIDEEGLVQIFSSDQDAIDRAKTII). The 69-residue stretch at 625-693 (GEVYTVPVVR…EKGRVDASIK (69 aa)) folds into the S1 motif domain. Residues 695 to 741 (LLPKPEKNEDGENGEEHRHCCCSHHKPDHHNESVEAPKKSDESETKE) are disordered. Composition is skewed to basic and acidic residues over residues 698–713 (KPEK…EHRH) and 723–741 (HHNE…ETKE).

This sequence belongs to the polyribonucleotide nucleotidyltransferase family. It depends on Mg(2+) as a cofactor.

It localises to the cytoplasm. It carries out the reaction RNA(n+1) + phosphate = RNA(n) + a ribonucleoside 5'-diphosphate. Its function is as follows. Involved in mRNA degradation. Catalyzes the phosphorolysis of single-stranded polyribonucleotides processively in the 3'- to 5'-direction. The polypeptide is Polyribonucleotide nucleotidyltransferase (Streptococcus thermophilus (strain CNRZ 1066)).